A 254-amino-acid polypeptide reads, in one-letter code: MGKVILVTGVSRGIGKSIVDVLFSLDKDTVVYGVARSEAPLKKLKEKYGDRFFYVVGDITEDSVLKQLVNAAVKGHGKIDSLVANAGVLEPVQNVNEIDVNAWKKLYDINFFSIVSLVGIALPELKKTNGNVVFVSSDACNMYFSSWGAYGSSKAALNHFAMTLANEERQVKAIAVAPGIVDTDMQVNIRENVGPSSMSAEQLKMFRGLKENNQLLDSSVPATVYAKLALHGIPDGVNGQYLSYNDPALADFMP.

Positions 7 and 85 each coordinate NADP(+). The active-site Proton donor is the serine 136. NADP(+)-binding residues include tyrosine 150, lysine 154, valine 181, and threonine 183. The Proton acceptor role is filled by tyrosine 150. Catalysis depends on lysine 154, which acts as the Lowers pKa of active site Tyr.

This sequence belongs to the short-chain dehydrogenases/reductases (SDR) family.

This is an uncharacterized protein from Saccharomyces cerevisiae (strain ATCC 204508 / S288c) (Baker's yeast).